The primary structure comprises 338 residues: Electron transfer flavoprotein subunit alpha (338 aa).

Position 275–303 (275–303 (IYIACAISGAIQPLAGMTGSDCIIAINKD)) interacts with FAD.

The protein belongs to the ETF alpha-subunit/FixB family. In terms of assembly, heterodimer of an alpha and a beta subunit. It depends on FAD as a cofactor.

The electron transfer flavoprotein serves as a specific electron acceptor for other dehydrogenases. It transfers the electrons to the main respiratory chain via ETF-ubiquinone oxidoreductase (ETF dehydrogenase). The polypeptide is Electron transfer flavoprotein subunit alpha (etfA) (Megasphaera elsdenii).